The primary structure comprises 548 residues: Chaperonin GroEL (548 aa).

Residues 30-33 (TLGP), Lys51, 87-91 (DGTTT), Gly415, 479-481 (NAA), and Asp495 contribute to the ATP site.

Belongs to the chaperonin (HSP60) family. In terms of assembly, forms a cylinder of 14 subunits composed of two heptameric rings stacked back-to-back. Interacts with the co-chaperonin GroES.

The protein localises to the cytoplasm. The catalysed reaction is ATP + H2O + a folded polypeptide = ADP + phosphate + an unfolded polypeptide.. Functionally, together with its co-chaperonin GroES, plays an essential role in assisting protein folding. The GroEL-GroES system forms a nano-cage that allows encapsulation of the non-native substrate proteins and provides a physical environment optimized to promote and accelerate protein folding. This Pseudomonas fluorescens (strain Pf0-1) protein is Chaperonin GroEL.